Here is a 3946-residue protein sequence, read N- to C-terminus: Hybrid PKS-NRPS synthetase lepA (3946 aa).

One can recognise a Ketosynthase family 3 (KS3) domain in the interval 9–440; it reads VEPIAIVGSA…GTNAHVILEG (432 aa). Catalysis depends on for beta-ketoacyl synthase activity residues cysteine 183, histidine 320, and histidine 363. A malonyl-CoA:ACP transacylase (MAT) domain region spans residues 553–871; the sequence is IFTGQGAQWA…PYAGIMRRAT (319 aa). The tract at residues 945 to 1073 is N-terminal hotdog fold; sequence HELLGRRAPD…GRLILFKGEG (129 aa). The dehydratase (DH) domain stretch occupies residues 945-1238; sequence HELLGRRAPD…RLQSFTEAKA (294 aa). A PKS/mFAS DH domain is found at 945-1239; sequence HELLGRRAPD…LQSFTEAKAL (295 aa). Histidine 977 acts as the Proton acceptor; for dehydratase activity in catalysis. A C-terminal hotdog fold region spans residues 1088 to 1239; sequence LSPLDREMFY…LQSFTEAKAL (152 aa). Aspartate 1147 serves as the catalytic Proton donor; for dehydratase activity. Positions 1380 to 1580 are methyltransferase (MT) domain; it reads LLNRFYTDGR…ATVSDLPSDG (201 aa). The segment at 2093–2266 is ketoreductase (KR) domain; that stretch reads TYWMIGLNSE…AASVIDIGLV (174 aa). Over residues 2352-2365 the composition is skewed to low complexity; sequence SSQDSDQSNSTSAS. The tract at residues 2352-2372 is disordered; the sequence is SSQDSDQSNSTSASIRDQVSS. Residues 2378 to 2455 enclose the Carrier 1 domain; the sequence is EGTDVLLRCF…EICAEAIQKF (78 aa). Serine 2415 is modified (O-(pantetheine 4'-phosphoryl)serine). Residues 2474-2531 form a disordered region; that stretch reads KQATASPPEIGREEAQSTSRAGILPTDQDNDNSSDSESQRKSGASSSSGSGTRTPTSI. Over residues 2508–2530 the composition is skewed to low complexity; sequence DSESQRKSGASSSSGSGTRTPTS. Positions 2547–2976 are condensation (C) domain; sequence PMSYAQSRLW…MQIQDGLLND (430 aa). The interval 3000 to 3402 is adenylation (A) (KR) domain; the sequence is FSQRAATDAN…GGLIFMGRLD (403 aa). The tract at residues 3492–3511 is disordered; that stretch reads GKVDRKALQDKPLPTEPDSS. The Carrier 2 domain occupies 3515–3594; the sequence is EALSLAEGEL…RMATLIDAEK (80 aa). At serine 3554 the chain carries O-(pantetheine 4'-phosphoryl)serine. The interval 3633 to 3833 is reductase (RED) domain; it reads LTGSTGFLGM…RFSVLMKVVP (201 aa).

In the C-terminal section; belongs to the NRP synthetase family.

Hybrid PKS-NRPS synthetase; part of the gene cluster 23 that mediates the biosynthesis of a family of 2-pyridones known as leporins. The hybrid PKS-NRPS synthetase lepA and the enoyl reductase lepG are responsible for fusion of phenylalanine with a hexaketide and subsequent release of the stable tetramic acid precursor, pre-leporin C. Because lepA lacks a designated enoylreductase (ER) domain, the required activity is provided the enoyl reductase lepG. It is possible that the dehydrogenase lepF also participates in production of pre-leporin C. Cytochrome P450 monooxygenase lepH is then required for the ring expansion step to yield leporin C. Leporin C is then presumably further oxidized by the N-hydroxylase lepD to form leporin B. LepI may possess a function in biosynthesis upstream of lepA. Leporin B is further oxidized in the presence of ferric ion to give the leporin B trimer-iron chelate, but whether or not this reaction is catalyzed by an enzyme in the pathway or by ferric ion is not determined yet. In Aspergillus flavus (strain ATCC 200026 / FGSC A1120 / IAM 13836 / NRRL 3357 / JCM 12722 / SRRC 167), this protein is Hybrid PKS-NRPS synthetase lepA.